The primary structure comprises 274 residues: F-actin-capping protein subunit alpha (274 aa).

Belongs to the F-actin-capping protein alpha subunit family. Heterodimer of an alpha and a beta subunit.

It is found in the cytoplasm. Functionally, F-actin-capping proteins bind in a Ca(2+)-independent manner to the fast growing ends of actin filaments (barbed end) thereby blocking the exchange of subunits at these ends. Unlike other capping proteins (such as gelsolin and severin), these proteins do not sever actin filaments. In Chaetomium thermophilum (strain DSM 1495 / CBS 144.50 / IMI 039719) (Thermochaetoides thermophila), this protein is F-actin-capping protein subunit alpha.